The following is a 223-amino-acid chain: Chorismate dehydratase (223 aa).

The protein belongs to the MqnA/MqnD family. MqnA subfamily.

The catalysed reaction is chorismate = 3-[(1-carboxyvinyl)-oxy]benzoate + H2O. It participates in quinol/quinone metabolism; menaquinone biosynthesis. Its function is as follows. Catalyzes the dehydration of chorismate into 3-[(1-carboxyvinyl)oxy]benzoate, a step in the biosynthesis of menaquinone (MK, vitamin K2). The protein is Chorismate dehydratase of Campylobacter jejuni subsp. jejuni serotype O:23/36 (strain 81-176).